Here is a 353-residue protein sequence, read N- to C-terminus: S-adenosylmethionine:tRNA ribosyltransferase-isomerase (353 aa).

It belongs to the QueA family. Monomer.

Its subcellular location is the cytoplasm. It carries out the reaction 7-aminomethyl-7-carbaguanosine(34) in tRNA + S-adenosyl-L-methionine = epoxyqueuosine(34) in tRNA + adenine + L-methionine + 2 H(+). It participates in tRNA modification; tRNA-queuosine biosynthesis. Transfers and isomerizes the ribose moiety from AdoMet to the 7-aminomethyl group of 7-deazaguanine (preQ1-tRNA) to give epoxyqueuosine (oQ-tRNA). This is S-adenosylmethionine:tRNA ribosyltransferase-isomerase from Blochmanniella floridana.